The chain runs to 145 residues: D-aminoacyl-tRNA deacylase (145 aa).

Residues 137-138 carry the Gly-cisPro motif, important for rejection of L-amino acids motif; it reads GP.

This sequence belongs to the DTD family. In terms of assembly, homodimer.

It localises to the cytoplasm. It catalyses the reaction glycyl-tRNA(Ala) + H2O = tRNA(Ala) + glycine + H(+). The catalysed reaction is a D-aminoacyl-tRNA + H2O = a tRNA + a D-alpha-amino acid + H(+). Functionally, an aminoacyl-tRNA editing enzyme that deacylates mischarged D-aminoacyl-tRNAs. Also deacylates mischarged glycyl-tRNA(Ala), protecting cells against glycine mischarging by AlaRS. Acts via tRNA-based rather than protein-based catalysis; rejects L-amino acids rather than detecting D-amino acids in the active site. By recycling D-aminoacyl-tRNA to D-amino acids and free tRNA molecules, this enzyme counteracts the toxicity associated with the formation of D-aminoacyl-tRNA entities in vivo and helps enforce protein L-homochirality. The sequence is that of D-aminoacyl-tRNA deacylase from Psychromonas ingrahamii (strain DSM 17664 / CCUG 51855 / 37).